Consider the following 820-residue polypeptide: DNA mismatch repair protein MutS (820 aa).

ATP is bound at residue 618 to 625 (GPNMAGKS).

The protein belongs to the DNA mismatch repair MutS family.

This protein is involved in the repair of mismatches in DNA. It is possible that it carries out the mismatch recognition step. This protein has a weak ATPase activity. This Chlamydia trachomatis serovar L2b (strain UCH-1/proctitis) protein is DNA mismatch repair protein MutS.